Consider the following 403-residue polypeptide: Protein WVD2-like 6 (403 aa).

Disordered stretches follow at residues Met-1–Asn-179 and Leu-254–Pro-403. Positions Gly-25 to Glu-56 are enriched in polar residues. A compositionally biased stretch (low complexity) spans Ser-103–Ser-118. Ser-113 carries the phosphoserine modification. Composition is skewed to basic and acidic residues over residues Asn-120 to His-132, Gly-139 to Val-153, and Gln-162 to Pro-171. The segment covering Lys-263–Asn-273 has biased composition (basic residues). Low complexity predominate over residues Lys-336–Lys-348. Residues Val-385–Met-394 show a composition bias toward basic and acidic residues.

It belongs to the TPX2 family. Expressed in seedlings.

It is found in the cytoplasm. The protein resides in the cytoskeleton. Microtubule-associated protein (MAP) that regulates the orientation of interphase cortical microtubules. In Arabidopsis thaliana (Mouse-ear cress), this protein is Protein WVD2-like 6.